Consider the following 407-residue polypeptide: Aminomethyltransferase, mitochondrial (407 aa).

Residues 1–29 (MRGGLWQLGQSITRRLGQSDKKTIVRRCY) constitute a mitochondrion transit peptide. Glu234, Arg265, and Tyr403 together coordinate substrate.

The protein belongs to the GcvT family. As to quaternary structure, the glycine cleavage system is composed of four proteins: P, T, L and H.

Its subcellular location is the mitochondrion. It carries out the reaction N(6)-[(R)-S(8)-aminomethyldihydrolipoyl]-L-lysyl-[protein] + (6S)-5,6,7,8-tetrahydrofolate = N(6)-[(R)-dihydrolipoyl]-L-lysyl-[protein] + (6R)-5,10-methylene-5,6,7,8-tetrahydrofolate + NH4(+). The glycine cleavage system catalyzes the degradation of glycine. The polypeptide is Aminomethyltransferase, mitochondrial (GDCST) (Flaveria anomala (Yellowtops)).